Here is a 352-residue protein sequence, read N- to C-terminus: CD5 antigen-like (352 aa).

A signal peptide spans 1–21 (MAPLFNLMLAILSIFVGSCFS). SRCR domains follow at residues 27–128 (VQLV…AQCE), 141–241 (VRLV…MECE), and 246–348 (LKLV…VICT). 11 disulfides stabilise this stretch: Cys-36–Cys-70, Cys-52–Cys-117, Cys-65–Cys-127, Cys-98–Cys-108, Cys-166–Cys-230, Cys-179–Cys-240, Cys-211–Cys-221, Cys-255–Cys-289, Cys-271–Cys-337, Cys-284–Cys-347, and Cys-317–Cys-327. Asn-99 is a glycosylation site (N-linked (GlcNAc...) asparagine). N-linked (GlcNAc...) asparagine glycosylation occurs at Asn-229.

As to quaternary structure, interacts with FASN; the interaction is direct. Interacts (via SRCR2 and SRCR3) with pentameric IgM (via Fc region); disulfide-linked. N-glycosylated. N-glycan at Asn-99 possesses only alpha2,6-sialylated terminals, while Asn-229 possesses both alpha2,6-sialylated and non-sialylated terminals. N-glycosylation increases secretion. Specifically expressed in tissue macrophages. Expressed in thymus, liver, spleen and lymph nodes. Present in Th17 cells; mainly present in non-pathogenic Th17 cells.

Its subcellular location is the secreted. It localises to the cytoplasm. Functionally, secreted protein that acts as a key regulator of lipid synthesis: mainly expressed by macrophages in lymphoid and inflamed tissues and regulates mechanisms in inflammatory responses, such as infection or atherosclerosis. Able to inhibit lipid droplet size in adipocytes. Following incorporation into mature adipocytes via CD36-mediated endocytosis, associates with cytosolic FASN, inhibiting fatty acid synthase activity and leading to lipolysis, the degradation of triacylglycerols into glycerol and free fatty acids (FFA). CD5L-induced lipolysis occurs with progression of obesity: participates in obesity-associated inflammation following recruitment of inflammatory macrophages into adipose tissues, a cause of insulin resistance and obesity-related metabolic disease. Regulation of intracellular lipids mediated by CD5L has a direct effect on transcription regulation mediated by nuclear receptors ROR-gamma (RORC). Acts as a key regulator of metabolic switch in T-helper Th17 cells. Regulates the expression of pro-inflammatory genes in Th17 cells by altering the lipid content and limiting synthesis of cholesterol ligand of RORC, the master transcription factor of Th17-cell differentiation. CD5L is mainly present in non-pathogenic Th17 cells, where it decreases the content of polyunsaturated fatty acyls (PUFA), affecting two metabolic proteins MSMO1 and CYP51A1, which synthesize ligands of RORC, limiting RORC activity and expression of pro-inflammatory genes. Participates in obesity-associated autoimmunity via its association with IgM, interfering with the binding of IgM to Fcalpha/mu receptor and enhancing the development of long-lived plasma cells that produce high-affinity IgG autoantibodies. Also acts as an inhibitor of apoptosis in macrophages: promotes macrophage survival from the apoptotic effects of oxidized lipids in case of atherosclerosis. Involved in early response to microbial infection against various pathogens by acting as a pattern recognition receptor and by promoting autophagy. The protein is CD5 antigen-like (Cd5l) of Mus musculus (Mouse).